We begin with the raw amino-acid sequence, 60 residues long: Large ribosomal subunit protein eL37 (60 aa).

The Zn(2+) site is built by C19, C22, C34, and C37. The segment at 19–37 (CRRCGRMSYHKRHKICSSC) adopts a C4-type zinc-finger fold.

This sequence belongs to the eukaryotic ribosomal protein eL37 family. Zn(2+) serves as cofactor.

Its function is as follows. Binds to the 23S rRNA. This Methanospirillum hungatei JF-1 (strain ATCC 27890 / DSM 864 / NBRC 100397 / JF-1) protein is Large ribosomal subunit protein eL37.